We begin with the raw amino-acid sequence, 172 residues long: Adenine phosphoribosyltransferase (172 aa).

This sequence belongs to the purine/pyrimidine phosphoribosyltransferase family. In terms of assembly, homodimer.

Its subcellular location is the cytoplasm. The catalysed reaction is AMP + diphosphate = 5-phospho-alpha-D-ribose 1-diphosphate + adenine. Its pathway is purine metabolism; AMP biosynthesis via salvage pathway; AMP from adenine: step 1/1. Catalyzes a salvage reaction resulting in the formation of AMP, that is energically less costly than de novo synthesis. The sequence is that of Adenine phosphoribosyltransferase from Prochlorococcus marinus (strain SARG / CCMP1375 / SS120).